Reading from the N-terminus, the 66-residue chain is Large ribosomal subunit protein bL33c (66 aa).

The protein belongs to the bacterial ribosomal protein bL33 family.

It is found in the plastid. The protein resides in the chloroplast. The protein is Large ribosomal subunit protein bL33c of Gossypium barbadense (Sea Island cotton).